The chain runs to 506 residues: MLERCKLKILKGACGRVKLYIILVVIPAIVISFFVYEKEKDTIAAEHKQEASVLLNLHRNKINYLIGETMARMTSLSIAIDRPVDIKKMQSILEKTFDSEPRFSGLYFLNAKGDVTASTTELKTKVNLADRSFFIKAKETKKTVISDSYSSRITGQPIFTICVPVLDSKRNVTDYLVAAIQIDYLKNLINLLSPDVYIEVVNQDGKMIFASGQASHAEDQKPVSGYLDDISWNMKVYPNPVTIEELSKSLVLPLSCIIVLLNILFILVLYYLLKRQTQLERSENEAQKLELIGTLAASTAHEIRNPLTGISGFIQLLQKKYKGEEDQLYFSIIEQEIKRINQIVSEFLVLGKPTAEKWELNSLQDIIGEIMPIIYSEGNLYNVEVELQYLTEQPLLVKCTKDHIKQVILNVAKNGLESMPEGGKLTISLGALDKKAIIKVVDNGEGISQEMLDHIFLPFVTSKEKGTGLGLVVCKRIVLMYGGSIHIESEVRRGTEVTITLPVSAS.

The next 2 membrane-spanning stretches (helical) occupy residues Val17–Glu37 and Leu250–Tyr270. The Histidine kinase domain occupies Ser298 to Ala505. The residue at position 301 (His301) is a Phosphohistidine; by autocatalysis.

In terms of assembly, oligomerizes, probably forms homodimers; oligomerization is assisted by FloT. Interacts with FloT.

Its subcellular location is the cell membrane. The catalysed reaction is ATP + protein L-histidine = ADP + protein N-phospho-L-histidine.. Functionally, phosphorylates the sporulation-regulatory protein spo0F and, to a minor extent, is responsible for heterogeneous expression of spo0A during logarithmical growth. Also phosphorylates spo0A under biofilm growth conditions. The sequence is that of Sporulation kinase D (kinD) from Bacillus subtilis (strain 168).